The sequence spans 132 residues: Pre-histone-like nucleoprotein (132 aa).

A propeptide spanning residues 2-23 (AILISPSNNTGWGLGTHKLFGG) is cleaved from the precursor. The short motif at 124-132 (RRKRRVRSK) is the Nuclear localization signal element.

The protein belongs to the adenoviridae histone-like nucleoprotein family. Interacts with the core-capsid bridging protein; this interaction bridges the virus core to the capsid. Interacts with host NPM1; this interaction might play a role in placing the pre-histone-like nucleoprotein on the viral DNA or regulating viral gene expression. Interacts with host HMGB1; this interaction inhibits host immune response. Post-translationally, cleaved near the N-terminus by the viral protease during virion maturation to form the mature protein.

The protein resides in the virion. It localises to the host nucleus. Its subcellular location is the host nucleolus. Functionally, plays a role in the inhibition of host immune response within the nucleus. Interacts with cellular nucleosomes and immobilizes the host immune danger signal HMGB1 on chromatin. In turn, prevents HMGB1 release out of the cell and thus decreases inflammation. Also plays a role in the wrapping and condensation of the viral DNA. May also promote viral genome import into the nucleus. The chain is Pre-histone-like nucleoprotein from Canine adenovirus serotype 1 (strain RI261) (CAdV-1).